A 137-amino-acid chain; its full sequence is Nucleoside diphosphate kinase (137 aa).

Residues Lys-9, Phe-57, Arg-85, Thr-91, Arg-102, and Asn-112 each coordinate ATP. The Pros-phosphohistidine intermediate role is filled by His-115.

Belongs to the NDK family. Homotetramer. Mg(2+) is required as a cofactor.

The protein localises to the cytoplasm. It catalyses the reaction a 2'-deoxyribonucleoside 5'-diphosphate + ATP = a 2'-deoxyribonucleoside 5'-triphosphate + ADP. The catalysed reaction is a ribonucleoside 5'-diphosphate + ATP = a ribonucleoside 5'-triphosphate + ADP. In terms of biological role, major role in the synthesis of nucleoside triphosphates other than ATP. The ATP gamma phosphate is transferred to the NDP beta phosphate via a ping-pong mechanism, using a phosphorylated active-site intermediate. The protein is Nucleoside diphosphate kinase of Helicobacter hepaticus (strain ATCC 51449 / 3B1).